The sequence spans 146 residues: MNSLSIFFIVVATAAVCLLFIQGYSIYENYGNIKEFNATHAAFEYSKSIGGTPALDRRVQDVNDTISDVKQKWRCVVYPGNGFVSASIFGFQTEVGLNNTRSIRKFNTMQQCIDFTFSDVINIDIYNPCVAPNINNAECQFLKSVL.

Residues 1-21 (MNSLSIFFIVVATAAVCLLFI) form a helical; Signal-anchor for type II membrane protein membrane-spanning segment. Topologically, residues 22-146 (QGYSIYENYG…AECQFLKSVL (125 aa)) are virion surface.

This sequence belongs to the orthopoxvirus OPG155 protein family. As to quaternary structure, part of a stable entry-fusion complex (EFC) which is at least composed of proteins OPG143, OPG147, OPG155, OPG086, OPG094, OPG107, OPG104, and OPG099. Formation of the viral membrane is necessary for the assembly of the complex. Interacts directly with protein OPG107. In terms of processing, contains two intramolecular disulfide bonds. They are created by the viral disulfide bond formation pathway, a poxvirus-specific pathway that operates on the cytoplasmic side of the MV membranes.

Its subcellular location is the virion membrane. Functionally, envelope protein required for virus entry into host cell and for cell-cell fusion (syncytium formation). This is Envelope protein OPG155 (OPG155) from Ectromelia virus (strain Moscow) (ECTV).